The sequence spans 148 residues: Ribonuclease pancreatic (148 aa).

Residues 1-25 (MGLEKSLILFPLLVLVVGWVQPSLG) form the signal peptide. Residues lysine 32, arginine 35, 65 to 69 (KPVNT), lysine 90, and arginine 109 each bind substrate. 4 cysteine pairs are disulfide-bonded: cysteine 50–cysteine 108, cysteine 64–cysteine 119, cysteine 82–cysteine 134, and cysteine 89–cysteine 96. The active-site Proton donor is histidine 143.

This sequence belongs to the pancreatic ribonuclease family. As to quaternary structure, monomer. Interacts with and forms tight 1:1 complexes with RNH1. Dimerization of two such complexes may occur. Interaction with RNH1 inhibits this protein. As to expression, pancreas.

The protein resides in the secreted. It catalyses the reaction an [RNA] containing cytidine + H2O = an [RNA]-3'-cytidine-3'-phosphate + a 5'-hydroxy-ribonucleotide-3'-[RNA].. The enzyme catalyses an [RNA] containing uridine + H2O = an [RNA]-3'-uridine-3'-phosphate + a 5'-hydroxy-ribonucleotide-3'-[RNA].. Its function is as follows. Endonuclease that catalyzes the cleavage of RNA on the 3' side of pyrimidine nucleotides. Acts on single-stranded and double-stranded RNA. This chain is Ribonuclease pancreatic (RNASE1), found in Peromyscus leucopus (White-footed mouse).